A 381-amino-acid chain; its full sequence is Penicillin-binding protein 4 (381 aa).

Residue S60 is the Acyl-ester intermediate of the active site. A helical transmembrane segment spans residues 271–291 (VAGCLDTWSFMATGWGHGWAL). Residue 299-308 (GYGHDGASGG) coordinates NAD(+). The helical transmembrane segment at 315 to 340 (VVPGSGVVAALLTNGGVATSFFTDLF) threads the bilayer.

It belongs to the beta-lactamase family.

It is found in the cell membrane. Functionally, involved in cell wall biosynthesis and may also act as a sensor of external penicillins. This is Penicillin-binding protein 4 (pbp) from Amycolatopsis lactamdurans (Nocardia lactamdurans).